We begin with the raw amino-acid sequence, 290 residues long: 4-diphosphocytidyl-2-C-methyl-D-erythritol kinase (290 aa).

The active site involves K14. Residue P103 to S113 coordinates ATP. D145 is an active-site residue.

It belongs to the GHMP kinase family. IspE subfamily. As to quaternary structure, homodimer.

The enzyme catalyses 4-CDP-2-C-methyl-D-erythritol + ATP = 4-CDP-2-C-methyl-D-erythritol 2-phosphate + ADP + H(+). The protein operates within isoprenoid biosynthesis; isopentenyl diphosphate biosynthesis via DXP pathway; isopentenyl diphosphate from 1-deoxy-D-xylulose 5-phosphate: step 3/6. Its function is as follows. Catalyzes the phosphorylation of the position 2 hydroxy group of 4-diphosphocytidyl-2C-methyl-D-erythritol. The chain is 4-diphosphocytidyl-2-C-methyl-D-erythritol kinase from Pectobacterium carotovorum subsp. carotovorum (strain PC1).